We begin with the raw amino-acid sequence, 389 residues long: MDLFEYQARDMFEAHGVPVLAGIVAYTPEEAKAAAEKIGGVTVVKAQVKVGGRGKAGGVKVAKSADEALEHSTNILGMDIKGHTVNKVMIAQGADIAEEYYFSVLLDRANRNYLAMCSVEGGMEIEQLAVERPEALAKIAIDPAVGIDQAKADEIVAAAGFAEELRGKVADVILKLWDVFKKEDATLVEVNPLVKTGAGDIVALDGKVSLDENAEFRHAKHAQLEDKDAADPLEAKAKAQDLNYVKLDGEVGIIGNGAGLVMSTLDVVAYAGENHGNVKPANFLDIGGGASAEVMAAGLDVILGDEQVKSVFVNVFGGITACDAVAKGIVGALAELGHTANKPLVVRLDGNNVEEGRRILNEANHPLVTLAATMDEGADKAAELANAAK.

An ATP-grasp domain is found at 9–236; that stretch reads RDMFEAHGVP…KDAADPLEAK (228 aa). ATP contacts are provided by residues Lys-45, 52 to 54, Ala-94, and Glu-99; that span reads GRG. Mg(2+) is bound by residues Asn-191 and Asp-205. Substrate contacts are provided by residues Asn-256 and 318-320; that span reads GIT.

Belongs to the succinate/malate CoA ligase beta subunit family. As to quaternary structure, heterotetramer of two alpha and two beta subunits. It depends on Mg(2+) as a cofactor.

It carries out the reaction succinate + ATP + CoA = succinyl-CoA + ADP + phosphate. The catalysed reaction is GTP + succinate + CoA = succinyl-CoA + GDP + phosphate. It functions in the pathway carbohydrate metabolism; tricarboxylic acid cycle; succinate from succinyl-CoA (ligase route): step 1/1. Its function is as follows. Succinyl-CoA synthetase functions in the citric acid cycle (TCA), coupling the hydrolysis of succinyl-CoA to the synthesis of either ATP or GTP and thus represents the only step of substrate-level phosphorylation in the TCA. The beta subunit provides nucleotide specificity of the enzyme and binds the substrate succinate, while the binding sites for coenzyme A and phosphate are found in the alpha subunit. In Pseudarthrobacter chlorophenolicus (strain ATCC 700700 / DSM 12829 / CIP 107037 / JCM 12360 / KCTC 9906 / NCIMB 13794 / A6) (Arthrobacter chlorophenolicus), this protein is Succinate--CoA ligase [ADP-forming] subunit beta.